The sequence spans 78 residues: Small ribosomal subunit protein bS20 (78 aa).

Belongs to the bacterial ribosomal protein bS20 family.

Binds directly to 16S ribosomal RNA. The protein is Small ribosomal subunit protein bS20 of Streptococcus sanguinis (strain SK36).